The primary structure comprises 252 residues: CD99 antigen-like protein 2 (252 aa).

The N-terminal stretch at 1 to 23 (MEKTLWTWTLLAVFSLLVVKGMS) is a signal peptide. A disordered region spans residues 30-170 (DALGDDDDDE…DLDPADDNNY (141 aa)). The segment covering 57-68 (AAVKPTLKPVKP) has biased composition (low complexity). The span at 96-120 (NDIKGKGKDSGKGDKEVGGGSRDDG) shows a compositional bias: basic and acidic residues. A helical membrane pass occupies residues 178-198 (TIAGIVSAVAMALVGAVSSYI).

This sequence belongs to the CD99 family.

The protein localises to the cell membrane. Its subcellular location is the cell junction. Functionally, may function as a homophilic adhesion molecule. The protein is CD99 antigen-like protein 2 (cd99l2) of Danio rerio (Zebrafish).